Consider the following 635-residue polypeptide: Threonine--tRNA ligase (635 aa).

Residues 1–61 (MIKITLKDGS…ENDCTLNLLT (61 aa)) form the TGS domain. The tract at residues 242-532 (DHRKLGRELD…LTEHYAGAFP (291 aa)) is catalytic. Residues Cys333, His384, and His509 each contribute to the Zn(2+) site.

The protein belongs to the class-II aminoacyl-tRNA synthetase family. Homodimer. Requires Zn(2+) as cofactor.

The protein resides in the cytoplasm. It catalyses the reaction tRNA(Thr) + L-threonine + ATP = L-threonyl-tRNA(Thr) + AMP + diphosphate + H(+). Its function is as follows. Catalyzes the attachment of threonine to tRNA(Thr) in a two-step reaction: L-threonine is first activated by ATP to form Thr-AMP and then transferred to the acceptor end of tRNA(Thr). Also edits incorrectly charged L-seryl-tRNA(Thr). The sequence is that of Threonine--tRNA ligase from Acetivibrio thermocellus (strain ATCC 27405 / DSM 1237 / JCM 9322 / NBRC 103400 / NCIMB 10682 / NRRL B-4536 / VPI 7372) (Clostridium thermocellum).